A 92-amino-acid polypeptide reads, in one-letter code: Putative pterin-4-alpha-carbinolamine dehydratase (92 aa).

Belongs to the pterin-4-alpha-carbinolamine dehydratase family.

The enzyme catalyses (4aS,6R)-4a-hydroxy-L-erythro-5,6,7,8-tetrahydrobiopterin = (6R)-L-erythro-6,7-dihydrobiopterin + H2O. The polypeptide is Putative pterin-4-alpha-carbinolamine dehydratase (Cereibacter sphaeroides (strain ATCC 17023 / DSM 158 / JCM 6121 / CCUG 31486 / LMG 2827 / NBRC 12203 / NCIMB 8253 / ATH 2.4.1.) (Rhodobacter sphaeroides)).